Here is a 403-residue protein sequence, read N- to C-terminus: Phosphoglycerate kinase (403 aa).

Residues 22–24 (DFN), R37, 60–63 (HFGR), R119, and R152 contribute to the substrate site. Residues K202, E324, and 354 to 357 (GGDT) contribute to the ATP site.

The protein belongs to the phosphoglycerate kinase family. In terms of assembly, monomer.

The protein localises to the cytoplasm. The enzyme catalyses (2R)-3-phosphoglycerate + ATP = (2R)-3-phospho-glyceroyl phosphate + ADP. Its pathway is carbohydrate degradation; glycolysis; pyruvate from D-glyceraldehyde 3-phosphate: step 2/5. The polypeptide is Phosphoglycerate kinase (Maricaulis maris (strain MCS10) (Caulobacter maris)).